Here is a 196-residue protein sequence, read N- to C-terminus: Imidazoleglycerol-phosphate dehydratase (196 aa).

The protein belongs to the imidazoleglycerol-phosphate dehydratase family.

The protein resides in the cytoplasm. It catalyses the reaction D-erythro-1-(imidazol-4-yl)glycerol 3-phosphate = 3-(imidazol-4-yl)-2-oxopropyl phosphate + H2O. It participates in amino-acid biosynthesis; L-histidine biosynthesis; L-histidine from 5-phospho-alpha-D-ribose 1-diphosphate: step 6/9. This Moorella thermoacetica (strain ATCC 39073 / JCM 9320) protein is Imidazoleglycerol-phosphate dehydratase.